Consider the following 426-residue polypeptide: Enolase (426 aa).

Gln163 serves as a coordination point for (2R)-2-phosphoglycerate. Glu205 (proton donor) is an active-site residue. Mg(2+) is bound by residues Asp242, Glu285, and Asp312. The (2R)-2-phosphoglycerate site is built by Lys337, Arg366, Ser367, and Lys388. Residue Lys337 is the Proton acceptor of the active site.

The protein belongs to the enolase family. In terms of assembly, component of the RNA degradosome, a multiprotein complex involved in RNA processing and mRNA degradation. Requires Mg(2+) as cofactor.

It localises to the cytoplasm. The protein localises to the secreted. It is found in the cell surface. The enzyme catalyses (2R)-2-phosphoglycerate = phosphoenolpyruvate + H2O. Its pathway is carbohydrate degradation; glycolysis; pyruvate from D-glyceraldehyde 3-phosphate: step 4/5. Functionally, catalyzes the reversible conversion of 2-phosphoglycerate (2-PG) into phosphoenolpyruvate (PEP). It is essential for the degradation of carbohydrates via glycolysis. The polypeptide is Enolase (Nitrosococcus oceani (strain ATCC 19707 / BCRC 17464 / JCM 30415 / NCIMB 11848 / C-107)).